The chain runs to 459 residues: tRNA modification GTPase MnmE (459 aa).

Residues Arg22, Glu87, and Arg126 each contribute to the (6S)-5-formyl-5,6,7,8-tetrahydrofolate site. Positions 221–381 (GINVAICGKP…LEESIEKAVL (161 aa)) constitute a TrmE-type G domain. Residue Asn231 coordinates K(+). Residues 231 to 236 (NVGKSS), 250 to 256 (TSIPGTT), and 275 to 278 (DTAG) each bind GTP. Ser235 contributes to the Mg(2+) binding site. K(+)-binding residues include Thr250, Ile252, and Thr255. Thr256 is a binding site for Mg(2+). Lys459 provides a ligand contact to (6S)-5-formyl-5,6,7,8-tetrahydrofolate.

It belongs to the TRAFAC class TrmE-Era-EngA-EngB-Septin-like GTPase superfamily. TrmE GTPase family. Homodimer. Heterotetramer of two MnmE and two MnmG subunits. The cofactor is K(+).

It localises to the cytoplasm. Functionally, exhibits a very high intrinsic GTPase hydrolysis rate. Involved in the addition of a carboxymethylaminomethyl (cmnm) group at the wobble position (U34) of certain tRNAs, forming tRNA-cmnm(5)s(2)U34. This is tRNA modification GTPase MnmE from Syntrophomonas wolfei subsp. wolfei (strain DSM 2245B / Goettingen).